Consider the following 445-residue polypeptide: Putative ubiquitin carboxyl-terminal hydrolase L293 (445 aa).

The region spanning 133–441 (KALANFGNSC…SAYIILYGDI (309 aa)) is the USP domain. The active-site Nucleophile is the C142. Catalysis depends on H384, which acts as the Proton acceptor.

This sequence belongs to the peptidase C19 family.

The protein localises to the virion. The enzyme catalyses Thiol-dependent hydrolysis of ester, thioester, amide, peptide and isopeptide bonds formed by the C-terminal Gly of ubiquitin (a 76-residue protein attached to proteins as an intracellular targeting signal).. The protein is Putative ubiquitin carboxyl-terminal hydrolase L293 of Acanthamoeba polyphaga mimivirus (APMV).